Consider the following 322-residue polypeptide: uncharacterized protein (322 aa).

The tract at residues 277–322 (LVTYGGKDGPSDNEDGPSDDEDGPSDDEEGLSKDGVSEYYQSDLDD) is disordered. The segment covering 287–305 (SDNEDGPSDDEDGPSDDEE) has biased composition (acidic residues).

This is an uncharacterized protein from Frog virus 3 (isolate Goorha) (FV-3).